The chain runs to 164 residues: Cytochrome c oxidase subunit 4, mitochondrial (164 aa).

The transit peptide at 1–33 (MFMNSMLRVSRQRAAVRSTVSLYRGFVSASIRR) directs the protein to the mitochondrion. The Zn(2+) site is built by C120, H128, C143, and C146.

Belongs to the cytochrome c oxidase subunit 5B family. Component of the cytochrome c oxidase (complex IV, CIV), a multisubunit enzyme composed of a catalytic core of 3 subunits and several supernumerary subunits. The complex exists as a monomer or a dimer and forms supercomplexes (SCs) in the inner mitochondrial membrane with ubiquinol-cytochrome c oxidoreductase (cytochrome b-c1 complex, complex III, CIII).

Its subcellular location is the mitochondrion inner membrane. Its pathway is energy metabolism; oxidative phosphorylation. Functionally, component of the cytochrome c oxidase, the last enzyme in the mitochondrial electron transport chain which drives oxidative phosphorylation. The respiratory chain contains 3 multisubunit complexes succinate dehydrogenase (complex II, CII), ubiquinol-cytochrome c oxidoreductase (cytochrome b-c1 complex, complex III, CIII) and cytochrome c oxidase (complex IV, CIV), that cooperate to transfer electrons derived from NADH and succinate to molecular oxygen, creating an electrochemical gradient over the inner membrane that drives transmembrane transport and the ATP synthase. Cytochrome c oxidase is the component of the respiratory chain that catalyzes the reduction of oxygen to water. Electrons originating from reduced cytochrome c in the intermembrane space (IMS) are transferred via the dinuclear copper A center (CU(A)) of subunit 2 and heme A of subunit 1 to the active site in subunit 1, a binuclear center (BNC) formed by heme A3 and copper B (CU(B)). The BNC reduces molecular oxygen to 2 water molecules using 4 electrons from cytochrome c in the IMS and 4 protons from the mitochondrial matrix. The polypeptide is Cytochrome c oxidase subunit 4, mitochondrial (cox4) (Schizosaccharomyces pombe (strain 972 / ATCC 24843) (Fission yeast)).